A 276-amino-acid polypeptide reads, in one-letter code: Large ribosomal subunit protein uL2 (276 aa).

Disordered regions lie at residues 36–58 (PLHKKGGRNNQGKMTVRHQGGGH) and 214–276 (LGKR…RRKK).

This sequence belongs to the universal ribosomal protein uL2 family. In terms of assembly, part of the 50S ribosomal subunit. Forms a bridge to the 30S subunit in the 70S ribosome.

One of the primary rRNA binding proteins. Required for association of the 30S and 50S subunits to form the 70S ribosome, for tRNA binding and peptide bond formation. It has been suggested to have peptidyltransferase activity; this is somewhat controversial. Makes several contacts with the 16S rRNA in the 70S ribosome. This is Large ribosomal subunit protein uL2 from Halalkalibacterium halodurans (strain ATCC BAA-125 / DSM 18197 / FERM 7344 / JCM 9153 / C-125) (Bacillus halodurans).